A 131-amino-acid chain; its full sequence is Small ribosomal subunit protein bS6 (131 aa).

Residues Glu-98–Glu-131 form a disordered region. Residues Lys-104–Phe-116 are compositionally biased toward basic and acidic residues. The segment covering Thr-120–Glu-131 has biased composition (acidic residues).

Belongs to the bacterial ribosomal protein bS6 family.

In terms of biological role, binds together with bS18 to 16S ribosomal RNA. The sequence is that of Small ribosomal subunit protein bS6 from Klebsiella pneumoniae (strain 342).